The sequence spans 185 residues: Protein GrpE (185 aa).

Basic and acidic residues predominate over residues 1-20 (MSQEKKEELQSEAQVTKEET). Residues 1-28 (MSQEKKEELQSEAQVTKEETPQANEAAA) form a disordered region.

This sequence belongs to the GrpE family. As to quaternary structure, homodimer.

The protein resides in the cytoplasm. Its function is as follows. Participates actively in the response to hyperosmotic and heat shock by preventing the aggregation of stress-denatured proteins, in association with DnaK and GrpE. It is the nucleotide exchange factor for DnaK and may function as a thermosensor. Unfolded proteins bind initially to DnaJ; upon interaction with the DnaJ-bound protein, DnaK hydrolyzes its bound ATP, resulting in the formation of a stable complex. GrpE releases ADP from DnaK; ATP binding to DnaK triggers the release of the substrate protein, thus completing the reaction cycle. Several rounds of ATP-dependent interactions between DnaJ, DnaK and GrpE are required for fully efficient folding. In Sulfurimonas denitrificans (strain ATCC 33889 / DSM 1251) (Thiomicrospira denitrificans (strain ATCC 33889 / DSM 1251)), this protein is Protein GrpE.